The sequence spans 784 residues: Ubiquitin carboxyl-terminal hydrolase 1 (784 aa).

Disordered stretches follow at residues 1 to 21 (MPGV…SKKN) and 34 to 56 (KRAL…RGSE). A compositionally biased stretch (polar residues) spans 7-16 (SESNGLSRGS). Serine 16 and serine 42 each carry phosphoserine. A compositionally biased stretch (basic and acidic residues) spans 45 to 56 (NEEKTSEYRGSE). A Phosphoserine modification is found at serine 67. Positions 81 to 784 (VGLNNLGNTC…TPYLLFYKKL (704 aa)) constitute a USP domain. The active-site Nucleophile is cysteine 90. Basic and acidic residues-rich tracts occupy residues 233–243 (VEEQSLQKEET) and 252–264 (DSMR…KEQL). Disordered regions lie at residues 233-342 (VEEQ…INWL) and 362-414 (TTNQ…KSGN). The residue at position 474 (serine 474) is a Phosphoserine. The active-site Proton acceptor is the histidine 592. The disordered stretch occupies residues 684 to 725 (NPDKVVGTPFTDNRNSETNDTTNGTHESDRNKESSDQTGVNM). Positions 693-708 (FTDNRNSETNDTTNGT) are enriched in polar residues. The span at 709 to 718 (HESDRNKESS) shows a compositional bias: basic and acidic residues. Phosphoserine is present on serine 767.

The protein belongs to the peptidase C19 family. As to quaternary structure, interacts with FANCD2 and PCNA. Interacts with WDR48. Interacts with ATAD5; the interaction regulates USP1-mediated PCNA deubiquitination. Autocatalytic cleavage of USP1 following UV irradiation inactivates it, leading to an increase in ubiquitinated PCNA, recruitment of POLH and translesion synthesis. In terms of processing, ubiquitinated by the CRL2(KLHDC2) complex following autocatalytic cleavage, leading to its degradation: the CRL2(KLHDC2) complex recognizes the diglycine (Gly-Gly) at the C-terminus.

Its subcellular location is the nucleus. The enzyme catalyses Thiol-dependent hydrolysis of ester, thioester, amide, peptide and isopeptide bonds formed by the C-terminal Gly of ubiquitin (a 76-residue protein attached to proteins as an intracellular targeting signal).. Functionally, negative regulator of DNA damage repair which specifically deubiquitinates monoubiquitinated FANCD2. Also involved in PCNA-mediated translesion synthesis (TLS) by deubiquitinating monoubiquitinated PCNA. Has almost no deubiquitinating activity by itself and requires the interaction with WDR48 to have a high activity. This is Ubiquitin carboxyl-terminal hydrolase 1 from Mus musculus (Mouse).